Consider the following 437-residue polypeptide: GTPase Der (437 aa).

2 EngA-type G domains span residues Asn-3–Thr-167 and Pro-176–Thr-352. GTP-binding positions include Gly-9–Ser-16, Asp-56–Trp-60, Asn-119–Asp-122, Gly-182–Ser-189, Asp-229–Ile-233, and Asn-294–Asp-297. The 85-residue stretch at Thr-353–Lys-437 folds into the KH-like domain.

The protein belongs to the TRAFAC class TrmE-Era-EngA-EngB-Septin-like GTPase superfamily. EngA (Der) GTPase family. In terms of assembly, associates with the 50S ribosomal subunit.

Its function is as follows. GTPase that plays an essential role in the late steps of ribosome biogenesis. The chain is GTPase Der from Bacteroides thetaiotaomicron (strain ATCC 29148 / DSM 2079 / JCM 5827 / CCUG 10774 / NCTC 10582 / VPI-5482 / E50).